A 295-amino-acid chain; its full sequence is uncharacterized protein (295 aa).

In terms of domain architecture, ABC transporter spans 2-226 (LSIESLCKSY…QQTNVFTLSV (225 aa)). Residue 34–41 (GPNGAGKT) participates in ATP binding.

This sequence belongs to the ABC transporter superfamily.

This is an uncharacterized protein from Bacillus subtilis (strain 168).